Here is an 87-residue protein sequence, read N- to C-terminus: Phosphocarrier protein HPr (87 aa).

An HPr domain is found at 1–87 (MEKIFKVTSD…ETMKNEGLGE (87 aa)). H14 (pros-phosphohistidine intermediate; alternate) is an active-site residue. Residue H14 is modified to Tele-phosphohistidine; alternate. S45 carries the post-translational modification Phosphoserine; by HPrK/P.

Belongs to the HPr family. The form phosphorylated at the tele nitrogen (N(epsilon)2), instead of the expected pros nitrogen (N(delta)1), of His-14 is not able to transfer its phosphoryl group to the B.subtilis EIIA-Glc domain. This form may be inactive in PTS-catalyzed sugar transport or target an as yet unknown acceptor molecule in an alternative metabolic process.

The protein localises to the cytoplasm. Its activity is regulated as follows. Phosphorylation on Ser-45 inhibits the phosphoryl transfer from enzyme I to HPr. In terms of biological role, general (non sugar-specific) component of the phosphoenolpyruvate-dependent sugar phosphotransferase system (sugar PTS). This major carbohydrate active-transport system catalyzes the phosphorylation of incoming sugar substrates concomitantly with their translocation across the cell membrane. The phosphoryl group from phosphoenolpyruvate (PEP) is transferred to the phosphoryl carrier protein HPr by enzyme I. Phospho-HPr then transfers it to the PTS EIIA domain. Functionally, P-Ser-HPr interacts with the catabolite control protein A (CcpA), forming a complex that binds to DNA at the catabolite response elements cre, operator sites preceding a large number of catabolite-regulated genes. Thus, P-Ser-HPr is a corepressor in carbon catabolite repression (CCR), a mechanism that allows bacteria to coordinate and optimize the utilization of available carbon sources. P-Ser-HPr mediates glucose catabolite repression of cry4A toxin expression. In Bacillus thuringiensis subsp. israelensis, this protein is Phosphocarrier protein HPr (ptsH).